The chain runs to 236 residues: MNTASLVRSLSRVALRSSQVVRMAAPRHFSQSAKVLSVTPELQQALNREIEAEQQLSSDNLQGAVAPTFAGFQVTNKDAEVRLTKKNGSEDILVVFNVNHSVDMDEGFDDEPSQAVAPVPVAMPPFTVEITKGDQRLCFHLELVPVDDQPDEYDFRVEEFYVAPSAKNGNEDVPSEVYASSGKYIDPDLHDLLFVRYLEERGLDARFCKTLVAYATHYEHSQYVGLLDKIKKFISK.

The N-terminal 36 residues, 1 to 36 (MNTASLVRSLSRVALRSSQVVRMAAPRHFSQSAKVL), are a transit peptide targeting the mitochondrion.

This sequence belongs to the MAM33 family.

It is found in the mitochondrion matrix. This is Conserved regulator of innate immunity protein 3 (cri-3) from Caenorhabditis elegans.